The following is a 330-amino-acid chain: Aspartate--ammonia ligase (330 aa).

The protein belongs to the class-II aminoacyl-tRNA synthetase family. AsnA subfamily.

It is found in the cytoplasm. The enzyme catalyses L-aspartate + NH4(+) + ATP = L-asparagine + AMP + diphosphate + H(+). The protein operates within amino-acid biosynthesis; L-asparagine biosynthesis; L-asparagine from L-aspartate (ammonia route): step 1/1. The chain is Aspartate--ammonia ligase from Aeromonas salmonicida (strain A449).